A 59-amino-acid polypeptide reads, in one-letter code: MAVPFRKTSKSAKNKRRSHLALVASNLVSCENCGSMIKPHRVCRECGFYKGKEVKSVQD.

It belongs to the bacterial ribosomal protein bL32 family.

This chain is Large ribosomal subunit protein bL32, found in Mesoplasma florum (strain ATCC 33453 / NBRC 100688 / NCTC 11704 / L1) (Acholeplasma florum).